Reading from the N-terminus, the 58-residue chain is Large ribosomal subunit protein eL24 (58 aa).

Zn(2+) contacts are provided by C6, C9, C32, and C36. Residues 6-36 (CSFCGAEIPPGYGIMYVRNDGTIQRYCSRKC) form a C4-type zinc finger.

The protein belongs to the eukaryotic ribosomal protein eL24 family. In terms of assembly, part of the 50S ribosomal subunit. Forms a cluster with proteins L3 and L14. Zn(2+) is required as a cofactor.

Binds to the 23S rRNA. This Pyrobaculum neutrophilum (strain DSM 2338 / JCM 9278 / NBRC 100436 / V24Sta) (Thermoproteus neutrophilus) protein is Large ribosomal subunit protein eL24.